A 263-amino-acid chain; its full sequence is Izumo sperm-egg fusion protein 3 (263 aa).

A signal peptide spans 1–22 (MGDLWVLLFSSLSLAAFHGVRG). Residues 23 to 176 (CLECDPKFTE…EDPKTAENRE (154 aa)) are Extracellular-facing. N98 and N128 each carry an N-linked (GlcNAc...) asparagine glycan. Residues 177 to 197 (ISLYLIFIAEAVILASAVLLF) traverse the membrane as a helical segment. Residues 198 to 263 (HVCISHRRKM…CAESEMQTGT (66 aa)) lie on the Cytoplasmic side of the membrane. The disordered stretch occupies residues 241–263 (GRSNSNSLTGEPTCAESEMQTGT).

This sequence belongs to the Izumo family. Monomer and homodimer. As to expression, sperm-specific (at protein level).

It localises to the cell membrane. The protein resides in the cytoplasmic vesicle. The protein localises to the secretory vesicle. It is found in the acrosome inner membrane. Functionally, plays an important role in the biogenesis of the acrosome during sperm development. This chain is Izumo sperm-egg fusion protein 3 (Izumo3), found in Mus musculus (Mouse).